We begin with the raw amino-acid sequence, 387 residues long: Patatin group J-1 (387 aa).

A signal peptide spans 1-23 (MATTKSFLILIVMILATTSSTFA). Positions 32–230 (LSIDGGGIKG…TVGDPALLSL (199 aa)) constitute a PNPLA domain. A GXGXXG motif is present at residues 36-41 (GGGIKG). Residues 75-79 (GTSTG) carry the GXSXG motif. Ser77 serves as the catalytic Nucleophile. N-linked (GlcNAc...) asparagine glycosylation is present at Asn115. Asp216 acts as the Proton acceptor in catalysis. Positions 216-218 (DGG) match the DGA/G motif. A coiled-coil region spans residues 322 to 385 (ENALTGTTTE…NRKKLRANKA (64 aa)).

The protein belongs to the patatin family. In terms of tissue distribution, tuber.

It localises to the vacuole. Probable lipolytic acyl hydrolase (LAH), an activity which is thought to be involved in the response of tubers to pathogens. The chain is Patatin group J-1 from Solanum tuberosum (Potato).